We begin with the raw amino-acid sequence, 375 residues long: 4-hydroxy-3-methylbut-2-en-1-yl diphosphate synthase (flavodoxin) (375 aa).

Residues Cys270, Cys273, Cys305, and Glu312 each contribute to the [4Fe-4S] cluster site.

This sequence belongs to the IspG family. [4Fe-4S] cluster serves as cofactor.

The enzyme catalyses (2E)-4-hydroxy-3-methylbut-2-enyl diphosphate + oxidized [flavodoxin] + H2O + 2 H(+) = 2-C-methyl-D-erythritol 2,4-cyclic diphosphate + reduced [flavodoxin]. The protein operates within isoprenoid biosynthesis; isopentenyl diphosphate biosynthesis via DXP pathway; isopentenyl diphosphate from 1-deoxy-D-xylulose 5-phosphate: step 5/6. Converts 2C-methyl-D-erythritol 2,4-cyclodiphosphate (ME-2,4cPP) into 1-hydroxy-2-methyl-2-(E)-butenyl 4-diphosphate. This is 4-hydroxy-3-methylbut-2-en-1-yl diphosphate synthase (flavodoxin) from Yersinia pseudotuberculosis serotype IB (strain PB1/+).